Consider the following 171-residue polypeptide: Co-chaperone protein HscB homolog (171 aa).

Residues 2 to 74 (NHFELFGLPN…VSRAEYILSE (73 aa)) form the J domain.

Belongs to the HscB family. As to quaternary structure, interacts with HscA and stimulates its ATPase activity.

Its function is as follows. Co-chaperone involved in the maturation of iron-sulfur cluster-containing proteins. Seems to help targeting proteins to be folded toward HscA. The chain is Co-chaperone protein HscB homolog from Aliivibrio fischeri (strain ATCC 700601 / ES114) (Vibrio fischeri).